The chain runs to 302 residues: Nucleotide-binding protein BceJ2315_08000 (302 aa).

Residue 8-15 coordinates ATP; it reads GISGSGKS. 57 to 60 contributes to the GTP binding site; the sequence is DARS.

It belongs to the RapZ-like family.

Displays ATPase and GTPase activities. The polypeptide is Nucleotide-binding protein BceJ2315_08000 (Burkholderia cenocepacia (strain ATCC BAA-245 / DSM 16553 / LMG 16656 / NCTC 13227 / J2315 / CF5610) (Burkholderia cepacia (strain J2315))).